The following is a 2471-amino-acid chain: MEKVHVDLDADSPYVKSLQKCFPHFEIEATQVTDNDHANARAFSHLATKLIESEVDPDQVILDIGSAPVRHTHSKHKYHCICPMISAEDPDRLHRYADKLRKSDVTDRFIASKAADLLTVMSTPDVETPSLCMHTDSTCRYHGTVAVYQDVYAVHAPTSIYHQALKGVRTIYWIGFDTTPFMYKNMAGAYPTYNTNWADESVLEARNIGLCSSDLHEQRFGKISIMRKKKLQPTNKVVFSVGSTIYTEERILLRSWHLPNVFHLKGKTSFTGRCNTIVSCEGYVVKKITISPGIYGKVDNLASTMHREGFLSCKVTDTLRGERVSFPVCTYVPATLCDQMTGILATDVSVDDAQKLLVGLNQRIVVNGRTQRNTNTMPNYLLPIVAQAFSRWAREYHADLEDEKDLGVRERSLVMGCCWAFKTHKITSIYKKPGTQTTKKVPAVFNSFVVPQLTSYGLDIELRRRIKMLLEEKKKPAPIITEADVAHLKGMQEEAEVVAEAEAIRAALPPLLPEVERETVEADIDLIMQEAGAGSVETPRRHIKVTTYPGEEMIGSYAVLSPQAVLNSEKLACIHPLAEQVLVMTHKGRAGRYKVEPYHGRVIVPSGTAIPIPDFQALSESATIVYNEREFVNRYLHHIAINGGALNTDEEYYKVLRSGEAESEYVFDIDAKKCVKKAEAGPMCLVGDLVDPPFHEFAYESLKTRPAAPHKVPTIGVYGVPGSGKSGIIKSAVTKRDLVVSAKKENCTEIIKDVKRMRGMDVAARTVDSVLLNGVKHPVDTLYIDEAFACHAGTLLALIAIVKPKKVVLCGDPKQCGFFNMMCLKVHFNHEICTEVYHKSISRRCTRTVTAIVSTLFYDKRMRTVNPCSDKIIIDTTSTTKPLKDDIILTCFRGWVKQLQIDYKNHEIMTAAASQGLTRKGVYAVRYKVNENPLYAQTSEHVNVLLTRTEKRIVWKTLAGDPWIKTLTAHYPGEFSATLEEWQAEHDAIMKRVLETPANSDVYQNKVHVCWAKALEPVLATANITLTRSQWETIPAFKDDKAFSPEMALNFLCTRFFGVDIDSGLFSAPTVPLTYTNEHWDNSPGPNRYGLCMRTAKELARRYPCILKAVDTGRVADVRTNTIRDYNPMINVVPLNRRLPHSLVVSHRYTGDGNYSQLLSKLTGKTILVIGTPINVPGKRVETLGPGPQCTYKADLDLGIPSMIGKYDIIFVNVRTPYKHHHYQQCEDHAIHHSMLTRKAVDHLNKGGTCVALGYGTADRATENIISAVARSFRFSRVCQPKCAWENTEVAFVFFGKDNGNHLRDQDQLSVVLNNIYQGSTQYEAGRAPAYRVIRGDISKSTDEVIVNAANNKGQPGAGVCGALYKKWPGAFDKAPIATGTAHLVKHTPNIIHAVGPNFSRMSEVEGNQKLSEVYMDIAKIINKERYNKVSIPLLSTGVYAGGKDRVMQSLNHLFTAMDTTDADVTIYCLDKQWETRIKDAIARKESVEELVEDDKPVDIELVRVHPQSSLVGRPGYSTNEGKVHSYLEGTRFHQTAKDIAEIYAMWPNKQEANEQICLYVLGESMTSIRSKCPVEESEASSPPHTIPCLCNYAMTAERVYRLRMAKNEQFAVCSSFQLPKYRITGVQKIQCNKPVIFSGVVPPAIHPRKFSTVEETQPTTIAERLIPRRPAPPVPVPARIPSPRCSPAVSMQSLGGSSTSEVIISEAEVHDSDSDCSIPPMPFVVEAEVHASQGSQWSIPSASGFEIREPLDDLGSITRTPAISDHSVDLITFDSVTDIFENFKQAPFQFLSDIRPIPAPRRRREPETDIQRFDKSEEKPVPKPRTRTAKYKKPPGVARSISEAELDEFIRRHSNXRYEAGAYIFSSETGQGHLQQKSTRQCKLQHPILERSVHEKFYAPRLDLEREKLLQRKLQLCASEGNRSRYQSRKVENMKAITAERLLQGIGAYLSAEPQPVECYKINYPVPVYSTTRSNRFSSADVAVRVCNLVMQENFPTVASYTITDEYDAYLDMVDGASCCLDTATFCPAKLRSFPKKHSYLKPEIRSAVPSPIQNTLQNVLAAATKRNCNVTQMRELPVLDSAAFNVECFKKYACNDEYWETFKNNPIRLTTENVTQYVTKLKGPKAAALFAKTHNLQPLHEIPMDRFVMDLKRDVKVTPGTKHTEERPKVQVIQAADPLATAYLCGIHRELVRRLNAVLLPNIHTLFDMSAEDFDAIIAEHFQFGDAVLETDIASFDKSEDDAIAMSALMILEDLGVDQALLDLIEAAFGNITSVHLPTGTRFKFGAMMKSGMFLTLFINTVVNIMIASRVLRERLTNSPCAAFIGDDNIVKGVKSDALMAERCATWLNMEVKIIDAVVGVKAPYFCGGFIVVDQITGTACRVADPLKRLFKLGKPLPLDDDQDGDRRRALYDEALRWNRIGITDELVKAVESRYDVLYISLVITALSTLAATVSNFKHIRGNPITLYG.

The 230-residue stretch at 28–257 folds into the Alphavirus-like MT domain; the sequence is EATQVTDNDH…EERILLRSWH (230 aa). Residues 242-261 form a nsP1 membrane-binding region; sequence GSTIYTEERILLRSWHLPNV. A lipid anchor (S-palmitoyl cysteine; by host) is attached at C417. The region spanning 688–839 is the (+)RNA virus helicase ATP-binding domain; sequence DLVDPPFHEF…HEICTEVYHK (152 aa). 719-726 is an a ribonucleoside 5'-triphosphate binding site; that stretch reads GVPGSGKS. A (+)RNA virus helicase C-terminal domain is found at 840-988; the sequence is SISRRCTRTV…LEEWQAEHDA (149 aa). Residues 1001–1320 form the Peptidase C9 domain; sequence DVYQNKVHVC…VVLNNIYQGS (320 aa). Residues 1002-1021 form a nucleolus localization signal region; that stretch reads VYQNKVHVCWAKALEPVLAT. C1010 acts as the For cysteine protease nsP2 activity in catalysis. Positions 1054–1063 match the Nuclear export signal motif; it reads TRFFGVDIDS. The For cysteine protease nsP2 activity role is filled by H1079. Positions 1177–1181 match the Nuclear localization signal motif; sequence PGKRV. One can recognise a Macro domain in the interval 1328–1486; that stretch reads APAYRVIRGD…RIKDAIARKE (159 aa). Residues D1337, N1351, G1359, G1438, V1439, and Y1440 each coordinate ADP-D-ribose. Zn(2+) contacts are provided by C1589, C1591, C1614, and C1632. Residues 1669 to 1692 are disordered; that stretch reads RRPAPPVPVPARIPSPRCSPAVSM. Over residues 1670-1681 the composition is skewed to pro residues; that stretch reads RPAPPVPVPARI. Positions 1771–1783 are binding to host G3BP family members; that stretch reads LITFDSVTDIFEN. The tract at residues 1798-1838 is disordered; the sequence is IPAPRRRREPETDIQRFDKSEEKPVPKPRTRTAKYKKPPGV. Positions 1805 to 1822 are enriched in basic and acidic residues; sequence REPETDIQRFDKSEEKPV. Residues 1823 to 1834 are compositionally biased toward basic residues; it reads PKPRTRTAKYKK. The segment at 1835–1851 is binding to host FXR family members; sequence PPGVARSISEAELDEFI. Residues 2228 to 2343 enclose the RdRp catalytic domain; that stretch reads DAVLETDIAS…KGVKSDALMA (116 aa).

As to quaternary structure, interacts with non-structural protein 3. Interacts with RNA-directed RNA polymerase nsP4. Interacts with protease nsP2. interacts with itself. Interacts with mRNA-capping enzyme nsP1. Interacts with host DDX1. Interacts with host DDX3. Interacts (via C-terminus) with host FXR1; this interaction inhibits the formation of host stress granules on viral mRNAs and the nsp3-FXR1 complexes bind viral RNAs and probably orchestrate the assembly of viral replication complexes. Interacts (via C-terminus) with host FXR2; this interaction inhibits the formation of host stress granules on viral mRNAs and the nsp3-FXR2 complexes bind viral RNAs and probably orchestrate the assembly of viral replication complexes. Interacts (via C-terminus) with host FMR1; this interaction inhibits the formation of host stress granules on viral mRNAs and the nsp3-FMR1 complexes bind viral RNAs and probably orchestrate the assembly of viral replication complexes. Interacts (via C-terminus) with host G3BP1; this interaction inhibits the formation of host stress granules on viral mRNAs and the nsp3-G3BP1 complexes bind viral RNAs and probably orchestrate the assembly of viral replication complexes. Interacts (via C-terminus) with host G3BP2; this interaction inhibits the formation of host stress granules on viral mRNAs and the nsp3-G3BP2 complexes bind viral RNAs and probably orchestrate the assembly of viral replication complexes. In terms of assembly, interacts with mRNA-capping enzyme nsP1. Interacts with protease nsP2. interacts with itself. As to quaternary structure, interacts with RNA-directed RNA polymerase nsP4. Interacts with mRNA-capping enzyme nsP1. Interacts with KPNA1/karyopherin-alpha1; this interaction probably allows the active transport of protease nsP2 into the host nucleus. Mg(2+) is required as a cofactor. Mn(2+) serves as cofactor. Post-translationally, specific enzymatic cleavages in vivo yield mature proteins. The processing of the polyprotein is temporally regulated. In early stages (1.7 hpi), P1234 is first cleaved in trans through its nsP2 protease activity, releasing P123' and nsP4, which associate to form the early replication complex. At the same time, P1234 is also cut at the nsP1/nsP2 site early in infection but with lower efficiency. After replication of the viral minus-strand RNAs (4 hpi), the polyproteins are cut at the nsP1/nsP2 and nsP2/nsP3 sites very efficiently, preventing accumulation of P123' and P1234 and allowing the formation of the late replication complex. NsP3'/nsP4 site is not cleaved anymore and P34 is produced rather than nsP4. Specific enzymatic cleavages in vivo yield mature proteins. The processing of the polyprotein is temporally regulated. In early stages (1.7 hpi), P123 is cleaved at the nsP1/nsP2 site with low efficiency. After replication of the viral minus-strand RNAs (4 hpi), the polyproteins are cut at the nsP1/nsP2 and nsP2/nsP3 sites very efficiently, preventing accumulation of P123 and allowing the formation of the late replication complex. In terms of processing, specific enzymatic cleavages in vivo yield mature proteins. The processing of the polyprotein is temporally regulated. In early stages (1.7 hpi), P123' is cleaved at the nsP1/nsP2 site with low efficiency. After replication of the viral minus-strand RNAs (4 hpi), the polyproteins are cut at the nsP1/nsP2 and nsP2/nsP3 sites very efficiently, preventing accumulation of P123' and allowing the formation of the late replication complex. Post-translationally, palmitoylated by host palmitoyltransferases ZDHHC2 and ZDHHC19. Phosphorylated by host on serines and threonines. In terms of processing, ubiquitinated; targets the protein for rapid degradation via the ubiquitin system. Nsp4 is present in extremely low quantities due to low frequency of translation through the amber stop-codon and the degradation by the ubiquitin pathway.

Its subcellular location is the host cytoplasmic vesicle membrane. The protein resides in the host cell membrane. It localises to the host cell projection. The protein localises to the host filopodium. It is found in the host nucleus. Its subcellular location is the host cytoplasm. It carries out the reaction GTP + S-adenosyl-L-methionine = N(7)-methyl-GTP + S-adenosyl-L-homocysteine. The catalysed reaction is N(7)-methyl-GTP + L-histidyl-[protein] = N(tele)-(N(7)-methylguanosine 5'-phospho)-L-histidyl-[protein] + diphosphate. The enzyme catalyses N(tele)-(N(7)-methylguanosine 5'-phospho)-L-histidyl-[protein] + a 5'-end diphospho-(purine-ribonucleoside) in mRNA + H(+) = a 5'-end (N(7)-methyl 5'-triphosphoguanosine)-(purine-ribonucleoside) in mRNA + L-histidyl-[protein]. It catalyses the reaction a 5'-end triphospho-ribonucleoside in mRNA + H2O = a 5'-end diphospho-ribonucleoside in mRNA + phosphate + H(+). It carries out the reaction a ribonucleoside 5'-triphosphate + H2O = a ribonucleoside 5'-diphosphate + phosphate + H(+). The catalysed reaction is ATP + H2O = ADP + phosphate + H(+). The enzyme catalyses RNA(n) + a ribonucleoside 5'-triphosphate = RNA(n+1) + diphosphate. It catalyses the reaction 4-O-(ADP-D-ribosyl)-L-aspartyl-[protein] + H2O = L-aspartyl-[protein] + ADP-D-ribose + H(+). It carries out the reaction 5-O-(ADP-D-ribosyl)-L-glutamyl-[protein] + H2O = L-glutamyl-[protein] + ADP-D-ribose + H(+). The catalysed reaction is RNA(n) + ATP = RNA(n)-3'-adenine ribonucleotide + diphosphate. The enzyme catalyses ADP-alpha-D-ribose 1''-phosphate + H2O = ADP-D-ribose + phosphate. Inhibited by sinefungin. Functionally, inactive precursor of the viral replicase, which is activated by cleavages carried out by the viral protease nsP2. Its function is as follows. The early replication complex formed by the polyprotein P123 and nsP4 synthesizes the minus-strand RNAs (antigenome). Polyprotein P123 is a short-lived polyprotein that accumulates during early stage of infection. As soon P123 is cleaved into mature proteins, the plus-strand RNAs synthesis begins. In terms of biological role, the early replication complex formed by the polyprotein P123' and nsP4 synthesizes minus-strand RNAs (antigenome). Polyprotein P123' is a short-lived polyprotein that accumulates during early stage of infection. As soon P123' is cleaved into mature proteins, the plus-strand RNAs synthesis begins. Cytoplasmic capping enzyme that catalyzes two virus-specific reactions: methyltransferase and nsP1 guanylyltransferase. mRNA-capping is necessary since all viral RNAs are synthesized in the cytoplasm, and host capping enzymes are restricted to the nucleus. The enzymatic reaction involves a covalent link between 7-methyl-GMP and nsP1, whereas eukaryotic capping enzymes form a covalent complex only with GMP. NsP1 capping consists in the following reactions: GTP is first methylated into 7-methyl-GMP and then is covalently linked to nsP1 to form the m7GMp-nsP1 complex from which 7-methyl-GMP complex is transferred to the mRNA to create the cap structure. NsP1 is also needed for the initiation of the minus-strand RNAs synthesis. Probably serves as a membrane anchor for the replication complex composed of nsP1-nsP4. Nsp1 is needed for the initiation of the minus-strand RNAs synthesis. Palmitoylated nsP1 is remodeling host cell cytoskeleton, and induces filopodium-like structure formation at the surface of the host cell. Functionally, multifunctional protein whose N-terminus is part of the RNA polymerase complex and displays NTPase, RNA triphosphatase and helicase activities. NTPase and RNA triphosphatase are involved in viral RNA capping and helicase keeps a check on the dsRNA replication intermediates. The C-terminus harbors a protease that specifically cleaves the polyproteins and releases the mature proteins. Required for the shutoff of minus-strand RNAs synthesis. Inhibits host translation to ensure maximal viral gene expression and evade host immune response. Its function is as follows. Seems to be essential for minus-strand RNAs and subgenomic 26S mRNAs synthesis. Displays mono-ADP-ribosylhydrolase activity. ADP-ribosylation is a post-translational modification that controls various processes of the host cell and the virus probably needs to revert it for optimal viral replication. Binds proteins of FXR and G3BP families and sequesters them into the viral RNA replication complexes thereby inhibiting the formation of host stress granules on viral mRNAs. The nsp3-FXR and nsp3-G3BP complexes bind viral RNAs and probably orchestrate the assembly of viral replication complexes, thanks to the ability of G3BP and FXR family members to self-assemble and bind DNA. In terms of biological role, seems to be essential for minus-strand RNAs and subgenomic 26S mRNAs synthesis. Displays mono-ADP-ribosylhydrolase activity. ADP-ribosylation is a post-translational modification that controls various processes of the host cell and the virus probably needs to revert it for optimal viral replication. Binds proteins of FXR and G3BP families and sequesters them into the viral RNA replication complexes thereby inhibiting the formation of host stress granules on viral mRNAs. The nsp3'-FXR and nsp3-G3BP complexes bind viral RNAs and probably orchestrate the assembly of viral replication complexes, thanks to the ability of G3BP and FXR family members to self-assemble and bind DNA. RNA dependent RNA polymerase. Replicates genomic and antigenomic RNA by recognizing replications specific signals. The early replication complex formed by the polyprotein P123 and nsP4 synthesizes minus-strand RNAs. The late replication complex composed of fully processed nsP1-nsP4 is responsible for the production of genomic and subgenomic plus-strand RNAs. This chain is Polyprotein P1234, found in Eastern equine encephalitis virus (strain PE-0.0155) (EEEV).